A 243-amino-acid polypeptide reads, in one-letter code: MSAPPCVAEVKVESYVFPATAKPPGTAKTLILGGAGARGLNIDGKFVKFTAIGVYLEADAVPSLAVKWNGKSAEELTDSVQFFRDIVTGPFEKLTRITMILPLSGKQYSEKVSENCVAFWKAAGMYGDAESKAIEKFNDVFSDQMFPPGASIFFTQSPHGSLTISFSKEGSMPEIASAVIENKPLSEAVLESIIGSKGVSPEAKQSLAVRLSELFKNGVNGGDAITGKVGCENDAIPQTVVSK.

The substrate site is built by T50, N115, and S192.

It belongs to the chalcone isomerase family.

The enzyme catalyses a chalcone = a flavanone.. It functions in the pathway secondary metabolite biosynthesis; flavonoid biosynthesis. Catalyzes the intramolecular cyclization of bicyclic chalcones into tricyclic (S)-flavanones. Responsible for the isomerization of 4,2',4',6'-tetrahydroxychalcone (also termed chalcone) into naringenin. This chain is Chalcone--flavanone isomerase (CHI), found in Ipomoea batatas (Sweet potato).